We begin with the raw amino-acid sequence, 207 residues long: Large ribosomal subunit protein uL4 (207 aa).

The disordered stretch occupies residues 54–74 (RSDVRGGGKKPYRQKGTGNAR).

It belongs to the universal ribosomal protein uL4 family. Part of the 50S ribosomal subunit.

Functionally, one of the primary rRNA binding proteins, this protein initially binds near the 5'-end of the 23S rRNA. It is important during the early stages of 50S assembly. It makes multiple contacts with different domains of the 23S rRNA in the assembled 50S subunit and ribosome. Its function is as follows. Forms part of the polypeptide exit tunnel. The protein is Large ribosomal subunit protein uL4 of Magnetococcus marinus (strain ATCC BAA-1437 / JCM 17883 / MC-1).